A 291-amino-acid chain; its full sequence is uncharacterized protein (291 aa).

The tract at residues 1–55 (MRTHDIPRSPLVGHKKNAAPDGIGASRACCPARENEPFKKGSTNSRGGGVEWSRS) is disordered. 2 helical membrane passes run 74 to 96 (WWAV…PVHA) and 188 to 210 (YYYL…RIRL).

It to T.pallidum TP_0733.

The protein localises to the cell membrane. This is an uncharacterized protein from Treponema pallidum (strain Nichols).